The primary structure comprises 214 residues: Holliday junction branch migration complex subunit RuvA (214 aa).

Residues 1-63 (MIASLSGTVE…EDALTLYGFA (63 aa)) are domain I. The tract at residues 64-142 (DRDEREVFEV…PTGEPVPGAE (79 aa)) is domain II. The tract at residues 143–151 (AEASDEPAV) is flexible linker. The interval 151–214 (VETVWHADVV…GMAGAVRGGR (64 aa)) is domain III.

This sequence belongs to the RuvA family. In terms of assembly, homotetramer. Forms an RuvA(8)-RuvB(12)-Holliday junction (HJ) complex. HJ DNA is sandwiched between 2 RuvA tetramers; dsDNA enters through RuvA and exits via RuvB. An RuvB hexamer assembles on each DNA strand where it exits the tetramer. Each RuvB hexamer is contacted by two RuvA subunits (via domain III) on 2 adjacent RuvB subunits; this complex drives branch migration. In the full resolvosome a probable DNA-RuvA(4)-RuvB(12)-RuvC(2) complex forms which resolves the HJ.

It localises to the cytoplasm. Its function is as follows. The RuvA-RuvB-RuvC complex processes Holliday junction (HJ) DNA during genetic recombination and DNA repair, while the RuvA-RuvB complex plays an important role in the rescue of blocked DNA replication forks via replication fork reversal (RFR). RuvA specifically binds to HJ cruciform DNA, conferring on it an open structure. The RuvB hexamer acts as an ATP-dependent pump, pulling dsDNA into and through the RuvAB complex. HJ branch migration allows RuvC to scan DNA until it finds its consensus sequence, where it cleaves and resolves the cruciform DNA. In Micrococcus luteus (strain ATCC 4698 / DSM 20030 / JCM 1464 / CCM 169 / CCUG 5858 / IAM 1056 / NBRC 3333 / NCIMB 9278 / NCTC 2665 / VKM Ac-2230) (Micrococcus lysodeikticus), this protein is Holliday junction branch migration complex subunit RuvA.